A 274-amino-acid chain; its full sequence is Orotidine 5'-phosphate decarboxylase (274 aa).

Lys-95 (proton donor) is an active-site residue.

Belongs to the OMP decarboxylase family. Type 2 subfamily.

It catalyses the reaction orotidine 5'-phosphate + H(+) = UMP + CO2. It participates in pyrimidine metabolism; UMP biosynthesis via de novo pathway; UMP from orotate: step 2/2. This chain is Orotidine 5'-phosphate decarboxylase, found in Variovorax paradoxus (strain S110).